A 227-amino-acid polypeptide reads, in one-letter code: PKHD-type hydroxylase ACICU_00484 (227 aa).

Residues 78-178 (DIIPPLFNRY…RIASFFWVQS (101 aa)) enclose the Fe2OG dioxygenase domain. Fe cation-binding residues include histidine 96, aspartate 98, and histidine 159. A 2-oxoglutarate-binding site is contributed by arginine 169.

The cofactor is Fe(2+). L-ascorbate serves as cofactor.

The protein is PKHD-type hydroxylase ACICU_00484 of Acinetobacter baumannii (strain ACICU).